The following is a 128-amino-acid chain: MIRTFMNSKIHRARVTESNLNYVGSITIDANILDAVDILPNEKVAIVNNNNGARFETYVIAGERGSGKMCLNGAASRLVEVGDVIIIMTYAQLNEDEMVDHSPKVAVLNENNEIIEMINEKENTISNV.

The active-site Schiff-base intermediate with substrate; via pyruvic acid is the serine 25. A Pyruvic acid (Ser) modification is found at serine 25. A substrate-binding site is contributed by threonine 57. The active-site Proton donor is tyrosine 58. 73–75 serves as a coordination point for substrate; it reads GAA.

This sequence belongs to the PanD family. In terms of assembly, heterooctamer of four alpha and four beta subunits. Requires pyruvate as cofactor. Is synthesized initially as an inactive proenzyme, which is activated by self-cleavage at a specific serine bond to produce a beta-subunit with a hydroxyl group at its C-terminus and an alpha-subunit with a pyruvoyl group at its N-terminus.

It localises to the cytoplasm. It carries out the reaction L-aspartate + H(+) = beta-alanine + CO2. The protein operates within cofactor biosynthesis; (R)-pantothenate biosynthesis; beta-alanine from L-aspartate: step 1/1. Its function is as follows. Catalyzes the pyruvoyl-dependent decarboxylation of aspartate to produce beta-alanine. The protein is Aspartate 1-decarboxylase of Staphylococcus epidermidis (strain ATCC 35984 / DSM 28319 / BCRC 17069 / CCUG 31568 / BM 3577 / RP62A).